The sequence spans 636 residues: TNFAIP3-interacting protein 1 (636 aa).

The stretch at 20-73 (EASAAFERLVKENSRLKEKMQGIKMLGELLEESQMEATRLRQKAEELVKDNELL) forms a coiled coil. Residues 61 to 71 (QKAEELVKDNE) are compositionally biased toward basic and acidic residues. Disordered stretches follow at residues 61-151 (QKAE…GPLP) and 252-283 (MSNG…QQQA). Ser77 carries the post-translational modification Phosphoserine. The tract at residues 94–412 (SNVTASPTAP…SPLTRQREYQ (319 aa)) is interaction with Nef. Residues 131-142 (EEQNSPESSSHA) are compositionally biased toward polar residues. Residues 196–258 (SKVHKNEQRT…KLLMSNGNKE (63 aa)) adopt a coiled-coil conformation. Ser284 bears the Phosphoserine mark. Positions 294 to 535 (VALGAAEKKV…RKAKASGERY (242 aa)) form a coiled coil. Residues 351 to 367 (DLEAEREQKQRDFDRKL) form an interaction with Shigella flexneri ipah9.8 region. At Ser403 the chain carries Phosphoserine. The segment at 431–588 (TPPSSPPTAF…MEHPPPLPNS (158 aa)) is required for inhibitory activity of TNF-induced NF-kappa-B activation. Thr438 carries the post-translational modification Phosphothreonine. Ser442 is modified (phosphoserine). A ubiquitin-binding domain (UBD) region spans residues 452 to 510 (KQELVTQNELLKQQVKIFEEDFQRERSDRERMNEEKEELKKQVEKLQAQVTLSNAQLKA). Residues 524 to 530 (QKRKAKA) carry the Nuclear localization signal motif. At Tyr552 the chain carries Phosphotyrosine. Asymmetric dimethylarginine is present on Arg571. Asymmetric dimethylarginine; alternate is present on Arg599. At Arg599 the chain carries Omega-N-methylarginine; alternate. The interval 603–636 (GGVRNPNQSSQVMDPPTARPTEPESPKNDREGPQ) is disordered. The span at 623–636 (TEPESPKNDREGPQ) shows a compositional bias: basic and acidic residues. Ser627 is subject to Phosphoserine.

As to quaternary structure, interacts with TNFAIP3 and IKBKG (polyubiquitinated); facilitates TNFAIP3-mediated de-ubiquitination of NEMO/IKBKG. Interacts with polyubiquitin. Interacts with MAPK1, SELPLG and PIK3CD. Interacts with IRAK1 (polyubiquitinated). Interacts with MYD88; the interaction is indicative for participation in an activated TLR-signaling complex. Interacts with HIV-1 matrix protein. Interacts with TAX1BP1. (Microbial infection) Interacts with Shigella flexneri ipah9.8; the interaction promotes polyubiquitination of IKBKG. Post-translationally, phosphorylation at Tyr-552 by SRC-family kinases recruits phosphoinositide-3-kinase (PI3K) PIK3CD:p85 heterodimer which results in integrin activation and leukocyte adhesion to activated endothelium during inflammation. Ubiquitous. Strongly expressed in peripheral blood lymphocytes, spleen and skeletal muscle, and is weakly expressed in the brain. In peripheral blood mononucleocytes, isoform 4 is mainly expressed and isoform 1 and isoform 7 are almost not expressed. Expression of isoform 1 and isoform 7 increases in leukemic cells.

The protein resides in the cytoplasm. Its subcellular location is the nucleus. In terms of biological role, inhibits NF-kappa-B activation and TNF-induced NF-kappa-B-dependent gene expression by regulating TAX1BP1 and A20/TNFAIP3-mediated deubiquitination of IKBKG; proposed to link A20/TNFAIP3 to ubiquitinated IKBKG. Involved in regulation of EGF-induced ERK1/ERK2 signaling pathway; blocks MAPK3/MAPK1 nuclear translocation and MAPK1-dependent transcription. Increases cell surface CD4(T4) antigen expression. Involved in the anti-inflammatory response of macrophages and positively regulates TLR-induced activation of CEBPB. Involved in the prevention of autoimmunity; this function implicates binding to polyubiquitin. Involved in leukocyte integrin activation during inflammation; this function is mediated by association with SELPLG and dependent on phosphorylation by SRC-family kinases. Interacts with HIV-1 matrix protein and is packaged into virions and overexpression can inhibit viral replication. May regulate matrix nuclear localization, both nuclear import of PIC (Preintegration complex) and export of GAG polyprotein and viral genomic RNA during virion production. In case of infection, promotes association of IKBKG with Shigella flexneri E3 ubiquitin-protein ligase ipah9.8 p which in turn promotes polyubiquitination of IKBKG leading to its proteasome-dependent degradation and thus is perturbing NF-kappa-B activation during bacterial infection. The protein is TNFAIP3-interacting protein 1 (TNIP1) of Homo sapiens (Human).